The sequence spans 224 residues: Imidazole glycerol phosphate synthase subunit HisH (224 aa).

The region spanning 5-214 is the Glutamine amidotransferase type-1 domain; that stretch reads DTIIIDTGCA…MKMNAGSFAG (210 aa). C80 serves as the catalytic Nucleophile. Catalysis depends on residues H189 and E191.

As to quaternary structure, heterodimer of HisH and HisF.

The protein localises to the cytoplasm. The enzyme catalyses 5-[(5-phospho-1-deoxy-D-ribulos-1-ylimino)methylamino]-1-(5-phospho-beta-D-ribosyl)imidazole-4-carboxamide + L-glutamine = D-erythro-1-(imidazol-4-yl)glycerol 3-phosphate + 5-amino-1-(5-phospho-beta-D-ribosyl)imidazole-4-carboxamide + L-glutamate + H(+). It catalyses the reaction L-glutamine + H2O = L-glutamate + NH4(+). It participates in amino-acid biosynthesis; L-histidine biosynthesis; L-histidine from 5-phospho-alpha-D-ribose 1-diphosphate: step 5/9. IGPS catalyzes the conversion of PRFAR and glutamine to IGP, AICAR and glutamate. The HisH subunit catalyzes the hydrolysis of glutamine to glutamate and ammonia as part of the synthesis of IGP and AICAR. The resulting ammonia molecule is channeled to the active site of HisF. This chain is Imidazole glycerol phosphate synthase subunit HisH, found in Shewanella loihica (strain ATCC BAA-1088 / PV-4).